A 118-amino-acid polypeptide reads, in one-letter code: Basic phospholipase A2 nigroxin A (118 aa).

7 disulfide bridges follow: C11–C70, C25–C117, C27–C43, C42–C98, C49–C91, C59–C84, and C77–C89. Y26, G28, and G30 together coordinate Ca(2+). H46 is a catalytic residue. D47 contacts Ca(2+). The active site involves D92.

The protein belongs to the phospholipase A2 family. Group I subfamily. D49 sub-subfamily. Requires Ca(2+) as cofactor. As to expression, expressed by the venom gland.

It is found in the secreted. The enzyme catalyses a 1,2-diacyl-sn-glycero-3-phosphocholine + H2O = a 1-acyl-sn-glycero-3-phosphocholine + a fatty acid + H(+). In terms of biological role, snake venom phospholipase A2 (PLA2) that has only a weak enzymatic activity. It has a myotoxic activity in vivo (dystrophic effect). PLA2 catalyzes the calcium-dependent hydrolysis of the 2-acyl groups in 3-sn-phosphoglycerides. This Micrurus nigrocinctus (Central American coral snake) protein is Basic phospholipase A2 nigroxin A.